The sequence spans 473 residues: Bifunctional protein HldE (473 aa).

The ribokinase stretch occupies residues Met1–Glu318. Asn194–Glu197 serves as a coordination point for ATP. Residue Asp263 is part of the active site. The tract at residues Phe343 to Lys473 is cytidylyltransferase.

The protein in the N-terminal section; belongs to the carbohydrate kinase PfkB family. It in the C-terminal section; belongs to the cytidylyltransferase family. In terms of assembly, homodimer.

The catalysed reaction is D-glycero-beta-D-manno-heptose 7-phosphate + ATP = D-glycero-beta-D-manno-heptose 1,7-bisphosphate + ADP + H(+). It carries out the reaction D-glycero-beta-D-manno-heptose 1-phosphate + ATP + H(+) = ADP-D-glycero-beta-D-manno-heptose + diphosphate. It participates in nucleotide-sugar biosynthesis; ADP-L-glycero-beta-D-manno-heptose biosynthesis; ADP-L-glycero-beta-D-manno-heptose from D-glycero-beta-D-manno-heptose 7-phosphate: step 1/4. It functions in the pathway nucleotide-sugar biosynthesis; ADP-L-glycero-beta-D-manno-heptose biosynthesis; ADP-L-glycero-beta-D-manno-heptose from D-glycero-beta-D-manno-heptose 7-phosphate: step 3/4. In terms of biological role, catalyzes the phosphorylation of D-glycero-D-manno-heptose 7-phosphate at the C-1 position to selectively form D-glycero-beta-D-manno-heptose-1,7-bisphosphate. Its function is as follows. Catalyzes the ADP transfer from ATP to D-glycero-beta-D-manno-heptose 1-phosphate, yielding ADP-D-glycero-beta-D-manno-heptose. The sequence is that of Bifunctional protein HldE from Ectopseudomonas mendocina (strain ymp) (Pseudomonas mendocina).